Consider the following 182-residue polypeptide: Molybdopterin synthase catalytic subunit (182 aa).

Substrate is bound by residues 119 to 120, K135, and 142 to 144; these read HR and KRE. The interval 152–182 is disordered; that stretch reads VWRANRDGAPGQRIDTAEPAVGAGSGGEIDD.

It belongs to the MoaE family. MOCS2B subfamily. Heterotetramer; composed of 2 small (MOCS2A) and 2 large (MOCS2B) subunits.

It is found in the cytoplasm. It catalyses the reaction 2 [molybdopterin-synthase sulfur-carrier protein]-C-terminal-Gly-aminoethanethioate + cyclic pyranopterin phosphate + H2O = molybdopterin + 2 [molybdopterin-synthase sulfur-carrier protein]-C-terminal Gly-Gly + 2 H(+). Its pathway is cofactor biosynthesis; molybdopterin biosynthesis. In terms of biological role, catalytic subunit of the molybdopterin synthase complex, a complex that catalyzes the conversion of precursor Z into molybdopterin. Acts by mediating the incorporation of 2 sulfur atoms from thiocarboxylated MOCS2A into precursor Z to generate a dithiolene group. The polypeptide is Molybdopterin synthase catalytic subunit (Pyricularia oryzae (strain 70-15 / ATCC MYA-4617 / FGSC 8958) (Rice blast fungus)).